We begin with the raw amino-acid sequence, 323 residues long: Aldo-keto reductase family 1 member C3 (323 aa).

NADP(+) is bound by residues 20 to 24 (GFGTY) and Asp50. The active-site Proton donor is Tyr55. His117 contacts substrate. NADP(+)-binding positions include 166–167 (SN), Gln190, 216–221 (YSALGS), and 270–280 (KSYNEQRIREN).

This sequence belongs to the aldo/keto reductase family.

It localises to the cytoplasm. The enzyme catalyses a 3alpha-hydroxysteroid + NADP(+) = a 3-oxosteroid + NADPH + H(+). It catalyses the reaction a 3alpha-hydroxysteroid + NAD(+) = a 3-oxosteroid + NADH + H(+). The catalysed reaction is prostaglandin F2alpha + NADP(+) = prostaglandin D2 + NADPH + H(+). It carries out the reaction testosterone + NAD(+) = androst-4-ene-3,17-dione + NADH + H(+). The enzyme catalyses testosterone + NADP(+) = androst-4-ene-3,17-dione + NADPH + H(+). It catalyses the reaction prostaglandin F2alpha + NADP(+) = prostaglandin H2 + NADPH + H(+). The catalysed reaction is prostaglandin D2 + NADPH + H(+) = 11beta-prostaglandin F2 + NADP(+). It carries out the reaction prostaglandin D2-ethanolamide + NADPH + H(+) = 11beta-prostaglandin F2-ethanolamide + NADP(+). The enzyme catalyses 17beta-estradiol + NADP(+) = estrone + NADPH + H(+). It catalyses the reaction 17beta-estradiol + NAD(+) = estrone + NADH + H(+). The catalysed reaction is (20S)-hydroxypregn-4-en-3-one + NADP(+) = progesterone + NADPH + H(+). It carries out the reaction (20S)-hydroxypregn-4-en-3-one + NAD(+) = progesterone + NADH + H(+). The enzyme catalyses 5alpha-androstane-3alpha,17beta-diol + NADP(+) = 17beta-hydroxy-5alpha-androstan-3-one + NADPH + H(+). It catalyses the reaction 5alpha-androstane-3alpha,17beta-diol + NAD(+) = 17beta-hydroxy-5alpha-androstan-3-one + NADH + H(+). The catalysed reaction is androsterone + NADPH + H(+) = 5alpha-androstane-3alpha,17beta-diol + NADP(+). It carries out the reaction 5alpha-androstane-3alpha,17beta-diol + NAD(+) = androsterone + NADH + H(+). The enzyme catalyses 5alpha-androstane-3beta,17beta-diol + NADP(+) = 17beta-hydroxy-5alpha-androstan-3-one + NADPH + H(+). It catalyses the reaction 9-cis-retinol + NADP(+) = 9-cis-retinal + NADPH + H(+). Its pathway is steroid metabolism. Functionally, cytosolic aldo-keto reductase that catalyzes the NADH and NADPH-dependent reduction of ketosteroids to hydroxysteroids. Acts as a NAD(P)(H)-dependent 3-, 17- and 20-ketosteroid reductase on the steroid nucleus and side chain and regulates the metabolism of androgens, estrogens and progesterone. Displays the ability to catalyze both oxidation and reduction in vitro, but most probably acts as a reductase in vivo since the oxidase activity measured in vitro is inhibited by physiological concentration of NADPH. Acts preferentially as a 17-ketosteroid reductase and has the highest catalytic efficiency of the AKR1C enzyme for the reduction of delta4-androstenedione to form testosterone. Reduces prostaglandin (PG) D2 to 11beta-prostaglandin F2, progesterone to 20alpha-hydroxyprogesterone and estrone to 17beta-estradiol. Catalyzes the transformation of the potent androgen dihydrotestosterone (DHT) into the less active form, 5-alpha-androstan-3-alpha,17-beta-diol (3-alpha-diol). Also displays retinaldehyde reductase activity toward 9-cis-retinal. In Pongo abelii (Sumatran orangutan), this protein is Aldo-keto reductase family 1 member C3 (AKR1C3).